The following is a 111-amino-acid chain: Ig kappa chain V-III region PC 2485/PC 4039 (111 aa).

The segment at 1–23 (DIVLTQSPASLAVSLGQRATISC) is framework-1. Residues cysteine 23 and cysteine 92 are joined by a disulfide bond. The complementarity-determining-1 stretch occupies residues 24 to 38 (RASKSVSTSGYSYMH). Residues 39–53 (WYQQKPGQPPKLLIY) form a framework-2 region. The segment at 54–60 (LASSLES) is complementarity-determining-2. A framework-3 region spans residues 61-92 (GVPARFSGSGSGTDFTLNIQPVEEEDAAIYYC). The complementarity-determining-3 stretch occupies residues 93-101 (QHSRELPLT). The tract at residues 102–111 (FGAGTKLELK) is framework-4.

In Mus musculus (Mouse), this protein is Ig kappa chain V-III region PC 2485/PC 4039.